The chain runs to 355 residues: DNA-directed RNA polymerase subunit alpha (355 aa).

The tract at residues 1–248 is alpha N-terminal domain (alpha-NTD); that stretch reads MYYNNDVSLC…EQLQPFISSD (248 aa). The interval 267–355 is alpha C-terminal domain (alpha-CTD); it reads YDPVLLRKVD…ELAKQHTDED (89 aa).

This sequence belongs to the RNA polymerase alpha chain family. Homodimer. The RNAP catalytic core consists of 2 alpha, 1 beta, 1 beta' and 1 omega subunit. When a sigma factor is associated with the core the holoenzyme is formed, which can initiate transcription.

It carries out the reaction RNA(n) + a ribonucleoside 5'-triphosphate = RNA(n+1) + diphosphate. Its function is as follows. DNA-dependent RNA polymerase catalyzes the transcription of DNA into RNA using the four ribonucleoside triphosphates as substrates. The polypeptide is DNA-directed RNA polymerase subunit alpha (Wolbachia pipientis wMel).